The chain runs to 396 residues: NADH-quinone oxidoreductase subunit D (396 aa).

Belongs to the complex I 49 kDa subunit family. NDH-1 is composed of 14 different subunits. Subunits NuoB, C, D, E, F, and G constitute the peripheral sector of the complex.

It localises to the cell inner membrane. It carries out the reaction a quinone + NADH + 5 H(+)(in) = a quinol + NAD(+) + 4 H(+)(out). Functionally, NDH-1 shuttles electrons from NADH, via FMN and iron-sulfur (Fe-S) centers, to quinones in the respiratory chain. The immediate electron acceptor for the enzyme in this species is believed to be ubiquinone. Couples the redox reaction to proton translocation (for every two electrons transferred, four hydrogen ions are translocated across the cytoplasmic membrane), and thus conserves the redox energy in a proton gradient. The polypeptide is NADH-quinone oxidoreductase subunit D (Brucella abortus (strain S19)).